Consider the following 98-residue polypeptide: MGAMSPWHWAIVALVVVILFGSKKLPDAARGLGRSLRIFKSEVKEMQNDNSTPAPTAQSAPPPQSAPAELPVADTTTAPVTPPAPVQPQSQHTEPKSA.

A helical transmembrane segment spans residues 1–21 (MGAMSPWHWAIVALVVVILFG). Residues 43 to 98 (VKEMQNDNSTPAPTAQSAPPPQSAPAELPVADTTTAPVTPPAPVQPQSQHTEPKSA) form a disordered region. Over residues 66-79 (APAELPVADTTTAP) the composition is skewed to low complexity.

It belongs to the TatA/E family. The Tat system comprises two distinct complexes: a TatABC complex, containing multiple copies of TatA, TatB and TatC subunits, and a separate TatA complex, containing only TatA subunits. Substrates initially bind to the TatABC complex, which probably triggers association of the separate TatA complex to form the active translocon.

It is found in the cell membrane. Its function is as follows. Part of the twin-arginine translocation (Tat) system that transports large folded proteins containing a characteristic twin-arginine motif in their signal peptide across membranes. TatA could form the protein-conducting channel of the Tat system. In Rhodococcus erythropolis (Arthrobacter picolinophilus), this protein is Sec-independent protein translocase protein TatA.